The sequence spans 75 residues: Probable protein BRICK1-A (75 aa).

Residues 41-72 are a coiled coil; that stretch reads MSCRSRLATLNEKLTALERRIEYIEARVTKGE.

This sequence belongs to the BRK1 family.

The protein localises to the cytoplasm. It is found in the cytoskeleton. Its function is as follows. Involved in regulation of actin and microtubule organization. Part of a WAVE complex that activates the Arp2/3 complex. This Xenopus laevis (African clawed frog) protein is Probable protein BRICK1-A (brk1-a).